Consider the following 219-residue polypeptide: Octanoyltransferase (219 aa).

Residues 34–209 (SESPDELWIV…TFSQLLGYQH (176 aa)) form the BPL/LPL catalytic domain. Residues 73–80 (RGGQVTYH), 140–142 (SLG), and 153–155 (GLA) contribute to the substrate site. C171 acts as the Acyl-thioester intermediate in catalysis.

Belongs to the LipB family.

The protein localises to the cytoplasm. The catalysed reaction is octanoyl-[ACP] + L-lysyl-[protein] = N(6)-octanoyl-L-lysyl-[protein] + holo-[ACP] + H(+). It functions in the pathway protein modification; protein lipoylation via endogenous pathway; protein N(6)-(lipoyl)lysine from octanoyl-[acyl-carrier-protein]: step 1/2. Catalyzes the transfer of endogenously produced octanoic acid from octanoyl-acyl-carrier-protein onto the lipoyl domains of lipoate-dependent enzymes. Lipoyl-ACP can also act as a substrate although octanoyl-ACP is likely to be the physiological substrate. This chain is Octanoyltransferase, found in Shewanella putrefaciens (strain CN-32 / ATCC BAA-453).